The primary structure comprises 195 residues: Imidazoleglycerol-phosphate dehydratase (195 aa).

Belongs to the imidazoleglycerol-phosphate dehydratase family.

Its subcellular location is the cytoplasm. It carries out the reaction D-erythro-1-(imidazol-4-yl)glycerol 3-phosphate = 3-(imidazol-4-yl)-2-oxopropyl phosphate + H2O. It functions in the pathway amino-acid biosynthesis; L-histidine biosynthesis; L-histidine from 5-phospho-alpha-D-ribose 1-diphosphate: step 6/9. The polypeptide is Imidazoleglycerol-phosphate dehydratase (Burkholderia thailandensis (strain ATCC 700388 / DSM 13276 / CCUG 48851 / CIP 106301 / E264)).